The following is a 310-amino-acid chain: Probable L,D-transpeptidase ErfK/SrfK (310 aa).

The N-terminal stretch at 1–21 (MRRVNILCSFALLFASHTSLA) is a signal peptide. In terms of domain architecture, L,D-TPase catalytic spans 96 to 231 (KGIVVNVAEM…VPVGTRVQII (136 aa)). The Proton donor/acceptor role is filled by histidine 191. Residue cysteine 207 is the Nucleophile of the active site.

Belongs to the YkuD family. In terms of assembly, interacts with DsbG.

It localises to the periplasm. It participates in cell wall biogenesis; peptidoglycan biosynthesis. Functionally, responsible, at least in part, for anchoring of the major outer membrane lipoprotein (Lpp, also known as the Braun lipoprotein) to the peptidoglycan via a meso-diaminopimelyl-L-Lys- bond on the terminal residue of Lpp. The chain is Probable L,D-transpeptidase ErfK/SrfK (erfK) from Escherichia coli (strain K12).